A 388-amino-acid chain; its full sequence is GTPase Obg (388 aa).

In terms of domain architecture, Obg spans 1–159 (MKFVDEAVIK…RELRLELLLL (159 aa)). Positions 160–333 (ADVGMLGLPN…LCYKLADFME (174 aa)) constitute an OBG-type G domain. Residues 166 to 173 (GLPNAGKS), 191 to 195 (FTTLI), 213 to 216 (DIPG), 283 to 286 (NKVD), and 314 to 316 (SAV) each bind GTP. 2 residues coordinate Mg(2+): S173 and T193. The segment at 359-380 (NQGEVITEDDDDWDDWDDEEDD) is disordered. The segment covering 364 to 380 (ITEDDDDWDDWDDEEDD) has biased composition (acidic residues).

Belongs to the TRAFAC class OBG-HflX-like GTPase superfamily. OBG GTPase family. Monomer. Mg(2+) serves as cofactor.

The protein localises to the cytoplasm. An essential GTPase which binds GTP, GDP and possibly (p)ppGpp with moderate affinity, with high nucleotide exchange rates and a fairly low GTP hydrolysis rate. Plays a role in control of the cell cycle, stress response, ribosome biogenesis and in those bacteria that undergo differentiation, in morphogenesis control. The sequence is that of GTPase Obg from Vibrio vulnificus (strain YJ016).